The sequence spans 258 residues: MQEKLKNDKLKIGKYEFDSRFILGSGKYSLELIKSAIEEAKAQIITLALRRANTGEIANILDYIPKNITLLPNTSGARNAEEALRIARLSRELGCGELIKIEVISDSRYLLPDNYETIKACELLAKEGFTPLPYMHADLYAARAMRDAGAAAIMPLAAPIGSNKGLCAKEFIQILLNEIDLPIIVDAGIGSPSQACEAMQMGVSAVMVNTAIAEAKDIALMARAFSLAVNAGRAAFLAGLASVSEAKASSPLTGFLRD.

The active-site Schiff-base intermediate with DXP is K100. 1-deoxy-D-xylulose 5-phosphate-binding positions include G161, 187–188, and 209–210; these read AG and NT.

This sequence belongs to the ThiG family. Homotetramer. Forms heterodimers with either ThiH or ThiS.

The protein localises to the cytoplasm. It catalyses the reaction [ThiS sulfur-carrier protein]-C-terminal-Gly-aminoethanethioate + 2-iminoacetate + 1-deoxy-D-xylulose 5-phosphate = [ThiS sulfur-carrier protein]-C-terminal Gly-Gly + 2-[(2R,5Z)-2-carboxy-4-methylthiazol-5(2H)-ylidene]ethyl phosphate + 2 H2O + H(+). It participates in cofactor biosynthesis; thiamine diphosphate biosynthesis. Functionally, catalyzes the rearrangement of 1-deoxy-D-xylulose 5-phosphate (DXP) to produce the thiazole phosphate moiety of thiamine. Sulfur is provided by the thiocarboxylate moiety of the carrier protein ThiS. In vitro, sulfur can be provided by H(2)S. The sequence is that of Thiazole synthase from Campylobacter jejuni (strain RM1221).